A 239-amino-acid polypeptide reads, in one-letter code: Ribosomal RNA small subunit methyltransferase G (239 aa).

Residues G95, L100, E118–T120, A146–E147, and R164 each bind S-adenosyl-L-methionine.

This sequence belongs to the methyltransferase superfamily. RNA methyltransferase RsmG family.

It localises to the cytoplasm. It carries out the reaction guanosine(527) in 16S rRNA + S-adenosyl-L-methionine = N(7)-methylguanosine(527) in 16S rRNA + S-adenosyl-L-homocysteine. Functionally, specifically methylates the N7 position of guanine in position 527 of 16S rRNA. This chain is Ribosomal RNA small subunit methyltransferase G, found in Sorangium cellulosum (strain So ce56) (Polyangium cellulosum (strain So ce56)).